The sequence spans 189 residues: uncharacterized protein (189 aa).

The protein belongs to the flavoredoxin family. The cofactor is FMN.

This is an uncharacterized protein from Escherichia coli (strain K12).